A 377-amino-acid chain; its full sequence is Flagellin D (377 aa).

Residues 104-128 (NSKADRVAIQEEVTALNDELNRIAE) adopt a coiled-coil conformation.

It belongs to the bacterial flagellin family. In terms of assembly, heteromer of multiple flagellin subunits including FlaA, FlaB, FlaC, FlaD and possibly FlaE.

It is found in the secreted. The protein resides in the bacterial flagellum. In terms of biological role, flagellin is the subunit protein which polymerizes to form the filaments of bacterial flagella. FlaD is not essential for flagellar synthesis and motility. May have a role in virulence unrelated to motility. This is Flagellin D (flaD) from Vibrio anguillarum (Listonella anguillarum).